Here is a 121-residue protein sequence, read N- to C-terminus: Protein YxiB (121 aa).

The protein is Protein YxiB (yxiB) of Bacillus subtilis (strain 168).